The following is a 378-amino-acid chain: Lipid-A-disaccharide synthase (378 aa).

This sequence belongs to the LpxB family.

It carries out the reaction a lipid X + a UDP-2-N,3-O-bis[(3R)-3-hydroxyacyl]-alpha-D-glucosamine = a lipid A disaccharide + UDP + H(+). It participates in bacterial outer membrane biogenesis; LPS lipid A biosynthesis. In terms of biological role, condensation of UDP-2,3-diacylglucosamine and 2,3-diacylglucosamine-1-phosphate to form lipid A disaccharide, a precursor of lipid A, a phosphorylated glycolipid that anchors the lipopolysaccharide to the outer membrane of the cell. The protein is Lipid-A-disaccharide synthase of Pseudomonas aeruginosa (strain UCBPP-PA14).